The following is a 470-amino-acid chain: Uronate isomerase (470 aa).

It belongs to the metallo-dependent hydrolases superfamily. Uronate isomerase family.

The enzyme catalyses D-glucuronate = D-fructuronate. It carries out the reaction aldehydo-D-galacturonate = keto-D-tagaturonate. It participates in carbohydrate metabolism; pentose and glucuronate interconversion. The sequence is that of Uronate isomerase from Shigella boydii serotype 18 (strain CDC 3083-94 / BS512).